Reading from the N-terminus, the 120-residue chain is ATP-dependent Clp protease adapter protein ClpS (120 aa).

It belongs to the ClpS family. In terms of assembly, binds to the N-terminal domain of the chaperone ClpA.

Involved in the modulation of the specificity of the ClpAP-mediated ATP-dependent protein degradation. The chain is ATP-dependent Clp protease adapter protein ClpS from Azotobacter vinelandii (strain DJ / ATCC BAA-1303).